Reading from the N-terminus, the 834-residue chain is Prominin-2 (834 aa).

Positions M1–G26 are cleaved as a signal peptide. The Extracellular segment spans residues A27–Y106. The chain crosses the membrane as a helical span at residues V107–F127. The Cytoplasmic segment spans residues C128–A153. The helical transmembrane segment at L154–V174 threads the bilayer. Over T175–W426 the chain is Extracellular. A glycan (N-linked (GlcNAc...) asparagine) is linked at N270. A helical transmembrane segment spans residues I427 to L447. Residues N448–R472 lie on the Cytoplasmic side of the membrane. Residues F473–F493 traverse the membrane as a helical segment. The Extracellular segment spans residues A494 to N779. Position 727 is a phosphoserine (S727). A helical transmembrane segment spans residues A780–V800. Residues K801–L834 are Cytoplasmic-facing. Residue S818 is modified to Phosphoserine.

This sequence belongs to the prominin family. As to quaternary structure, binds cholesterol. Post-translationally, glycosylated. In terms of tissue distribution, present in saliva within small membrane particles (at protein level). Expressed in kidney, prostate, trachea, esophagus, salivary gland, thyroid gland, mammary gland adrenal gland, placenta, stomach, spinal cord and liver. In submucosal tumor, expressed in spindle-shaped or stellate stromal cells. Expressed in prostate cancer cell lines.

Its subcellular location is the apical cell membrane. It localises to the basolateral cell membrane. The protein resides in the cell projection. The protein localises to the microvillus membrane. It is found in the cilium membrane. This Homo sapiens (Human) protein is Prominin-2 (PROM2).